Consider the following 62-residue polypeptide: Large ribosomal subunit protein eL37 (62 aa).

Zn(2+)-binding residues include C20, C23, C35, and C38. A C4-type zinc finger spans residues 20-38; it reads CRRCGRRSYNVAKGYCAAC.

Belongs to the eukaryotic ribosomal protein eL37 family. The cofactor is Zn(2+).

In terms of biological role, binds to the 23S rRNA. The chain is Large ribosomal subunit protein eL37 (rpl37e) from Aeropyrum pernix (strain ATCC 700893 / DSM 11879 / JCM 9820 / NBRC 100138 / K1).